The chain runs to 118 residues: Large ribosomal subunit protein bL19 (118 aa).

This sequence belongs to the bacterial ribosomal protein bL19 family.

Functionally, this protein is located at the 30S-50S ribosomal subunit interface and may play a role in the structure and function of the aminoacyl-tRNA binding site. This Campylobacter jejuni subsp. jejuni serotype O:6 (strain 81116 / NCTC 11828) protein is Large ribosomal subunit protein bL19.